We begin with the raw amino-acid sequence, 216 residues long: Cytochrome c oxidase assembly protein CtaG (216 aa).

Positions 1-23 are enriched in low complexity; sequence MTDAPQHPQQPATGTPATPKAAP. The interval 1-24 is disordered; sequence MTDAPQHPQQPATGTPATPKAAPR. Topologically, residues 1 to 26 are cytoplasmic; the sequence is MTDAPQHPQQPATGTPATPKAAPRVG. A helical; Signal-anchor for type II membrane protein transmembrane segment spans residues 27–49; that stretch reads RDVRIGATCGLLVALMVGAAYAA. At 50 to 216 the chain is on the periplasmic side; that stretch reads VPFYNWFCRA…SEPDRPGGSI (167 aa).

Belongs to the COX11/CtaG family.

The protein localises to the cell inner membrane. Its function is as follows. Exerts its effect at some terminal stage of cytochrome c oxidase synthesis, probably by being involved in the insertion of the copper B into subunit I. In Nitrobacter hamburgensis (strain DSM 10229 / NCIMB 13809 / X14), this protein is Cytochrome c oxidase assembly protein CtaG.